The sequence spans 323 residues: CIMIP2 protein CG18335 (323 aa).

The protein belongs to the CIMIP2 family.

The protein localises to the cytoplasm. It is found in the cytoskeleton. The protein resides in the cilium axoneme. In terms of biological role, probable microtubule inner protein (MIP) part of the dynein-decorated doublet microtubules (DMTs) in cilium axoneme. This Drosophila melanogaster (Fruit fly) protein is CIMIP2 protein CG18335.